An 81-amino-acid polypeptide reads, in one-letter code: Control protein C.BamHI (81 aa).

The 56-residue stretch at 13 to 68 folds into the HTH cro/C1-type domain; it reads VRQIRLSKSNMSQEKLAFECDLHRTYISDIERGTRNVSLDNIEKISKALGVQPKDL. Positions 25 to 44 form a DNA-binding region, H-T-H motif; that stretch reads QEKLAFECDLHRTYISDIER.

Its function is as follows. May help modulate methylase (M) and restriction enzyme (R) expression as cells undergo physiological changes such as sporulation or transformation. This is Control protein C.BamHI from Bacillus amyloliquefaciens (Bacillus velezensis).